Here is a 617-residue protein sequence, read N- to C-terminus: Putative type VI secretion system protein VgrGA (617 aa).

Disordered regions lie at residues 325–344 and 449–469; these read GQQPQALEEESGGEPTTLSN and RTFHATNPSPYPLPASKTRTS.

It belongs to the VgrG protein family.

Its function is as follows. A Vgr protein that is probably part of a type VI secretion system (T6SS). May be required for export of proteins involved in Rhs-mediated cellular contact-dependent growth inhibition (CDI). The sequence is that of Putative type VI secretion system protein VgrGA (vgrGA) from Dickeya dadantii (strain 3937) (Erwinia chrysanthemi (strain 3937)).